The following is a 311-amino-acid chain: uncharacterized protein (311 aa).

9 consecutive transmembrane segments (helical) span residues 11 to 31, 34 to 54, 72 to 92, 101 to 121, 147 to 167, 198 to 218, 233 to 253, 257 to 277, and 279 to 299; these read LDNW…GYLS, VGIV…FLSL, LAIS…LFGI, HVIV…FVAQ, IEGI…WYLM, WFGV…FALS, GFIA…SIVI, FALA…TYLL, and TIPF…NVGP.

It is found in the cell membrane. This is an uncharacterized protein from Mycoplasma pneumoniae (strain ATCC 29342 / M129 / Subtype 1) (Mycoplasmoides pneumoniae).